We begin with the raw amino-acid sequence, 424 residues long: Solute carrier family 67 member A1 (424 aa).

10 helical membrane passes run I26–I46, I59–F79, A90–S110, L156–S176, A184–A204, I243–I263, A276–G296, V312–C332, L334–I354, and F391–L411.

Belongs to the major facilitator (TC 2.A.1) superfamily. Organic cation transporter (TC 2.A.1.19) family. As to quaternary structure, interacts with RNF167. In terms of tissue distribution, expressed at high levels in adult and fetal kidney and liver, and adult colon. Expressed in fetal renal proximal tubules (at protein level). Expressed at lower levels in heart, brain and lung.

The protein resides in the apical cell membrane. May act as a transporter of organic cations based on a proton efflux antiport mechanism. May play a role in the transport of chloroquine and quinidine-related compounds in kidney. Plays a role in the regulation of lipid metabolism. The sequence is that of Solute carrier family 67 member A1 from Homo sapiens (Human).